We begin with the raw amino-acid sequence, 835 residues long: Translation initiation factor IF-2 (835 aa).

The disordered stretch occupies residues M1–A243. The span at V43 to A67 shows a compositional bias: low complexity. Basic and acidic residues-rich tracts occupy residues K85–R147, E157–E166, and E175–R205. The tr-type G domain occupies P332–E500. Residues G341 to T348 form a G1 region. G341–T348 contacts GTP. The segment at G366–H370 is G2. Positions D388–G391 are G3. GTP is bound by residues D388–H392 and N442–D445. The tract at residues N442–D445 is G4. The segment at S478–K480 is G5.

The protein belongs to the TRAFAC class translation factor GTPase superfamily. Classic translation factor GTPase family. IF-2 subfamily.

Its subcellular location is the cytoplasm. Functionally, one of the essential components for the initiation of protein synthesis. Protects formylmethionyl-tRNA from spontaneous hydrolysis and promotes its binding to the 30S ribosomal subunits. Also involved in the hydrolysis of GTP during the formation of the 70S ribosomal complex. The sequence is that of Translation initiation factor IF-2 from Ruegeria pomeroyi (strain ATCC 700808 / DSM 15171 / DSS-3) (Silicibacter pomeroyi).